A 155-amino-acid chain; its full sequence is Small ribosomal subunit protein uS7cz/uS7cy (155 aa).

This sequence belongs to the universal ribosomal protein uS7 family. Part of the 30S ribosomal subunit.

It localises to the plastid. Its subcellular location is the chloroplast. Functionally, one of the primary rRNA binding proteins, it binds directly to 16S rRNA where it nucleates assembly of the head domain of the 30S subunit. This is Small ribosomal subunit protein uS7cz/uS7cy (rps7-A) from Jasminum nudiflorum (Winter jasmine).